Here is a 349-residue protein sequence, read N- to C-terminus: MAWSLGTLRVTSHPYFRLLIPFLTVLLQCYGVWAFCHQFCYLQLYQRRNAKGACIGLIIVVLSLTFLIWYIWALMLVLGPGRQPTIPPFKIIPDSEIRTVSSESAVPDNSIAPPDIYPCDERGYPIWCSNCQSLKMSRTHHSTKVGYCVPRFDHYCVWIGTVLGRLNYKLFVQFTFYLDLVVLILMISIATQMRQMKGSANGNVYAVFALACCALLMAGPLFLTHIYYMCYNRTSIEIIEVNNKAKASRKFFCIYNPCDGYRYVIQFCPGENQDFWNKGNILTNLKEFLGPNYLSWFIPSILTHKQSYGKSSANYYDLIGDCNEVMSEKFQKYMIDKIERKEYVTRLVV.

2 helical membrane-spanning segments follow: residues leucine 19 to phenylalanine 39 and leucine 57 to valine 77. The DHHC domain maps to isoleucine 126–phenylalanine 176. Cysteine 156 functions as the S-palmitoyl cysteine intermediate in the catalytic mechanism. The next 2 helical transmembrane spans lie at leucine 170 to alanine 190 and valine 204 to threonine 224.

The protein belongs to the DHHC palmitoyltransferase family. PFA5 subfamily.

The protein localises to the membrane. The enzyme catalyses L-cysteinyl-[protein] + hexadecanoyl-CoA = S-hexadecanoyl-L-cysteinyl-[protein] + CoA. This chain is Palmitoyltransferase PFA5 (PFA5), found in Kluyveromyces lactis (strain ATCC 8585 / CBS 2359 / DSM 70799 / NBRC 1267 / NRRL Y-1140 / WM37) (Yeast).